A 389-amino-acid chain; its full sequence is DNA replication and repair protein RecF (389 aa).

ATP is bound at residue 30–37 (GPNGFGKT).

The protein belongs to the RecF family.

The protein localises to the cytoplasm. The RecF protein is involved in DNA metabolism; it is required for DNA replication and normal SOS inducibility. RecF binds preferentially to single-stranded, linear DNA. It also seems to bind ATP. The polypeptide is DNA replication and repair protein RecF (Mycolicibacterium gilvum (strain PYR-GCK) (Mycobacterium gilvum (strain PYR-GCK))).